The primary structure comprises 621 residues: Ubiquitin-like-specific protease 1 (621 aa).

The residue at position 2 (Ser-2) is an N-acetylserine. Ser-21 and Ser-25 each carry phosphoserine. Disordered stretches follow at residues 116–150 (FDGSEVEASGNSDVESRSSGSRSSDVPYGLRENYS) and 169–196 (RRRIESEGVGTPSTSPISSLASQKSNCD). The segment covering 124-141 (SGNSDVESRSSGSRSSDV) has biased composition (low complexity). Phosphothreonine is present on Thr-179. A compositionally biased stretch (polar residues) spans 179 to 196 (TPSTSPISSLASQKSNCD). Ser-264 bears the Phosphoserine mark. The interval 432 to 621 (NIEITVRDFK…AHLILTDALK (190 aa)) is protease. Active-site residues include His-514, Asp-531, and Cys-580.

This sequence belongs to the peptidase C48 family.

It catalyses the reaction Hydrolysis of the alpha-linked peptide bond in the sequence Gly-Gly-|-Ala-Thr-Tyr at the C-terminal end of the small ubiquitin-like modifier (SUMO) propeptide, Smt3, leading to the mature form of the protein. A second reaction involves the cleavage of an epsilon-linked peptide bond between the C-terminal glycine of the mature SUMO and the lysine epsilon-amino group of the target protein.. In terms of biological role, protease that catalyzes two essential functions in the SUMO pathway: processing of full-length SMT3 to its mature form and deconjugation of SMT3 from targeted proteins. Has an essential role in the G2/M phase of the cell cycle. The chain is Ubiquitin-like-specific protease 1 (ULP1) from Saccharomyces cerevisiae (strain ATCC 204508 / S288c) (Baker's yeast).